A 360-amino-acid chain; its full sequence is Mitogen-activated protein kinase 14 (360 aa).

Serine 2 bears the N-acetylserine mark. The residue at position 2 (serine 2) is a Phosphoserine. Threonine 16 is subject to Phosphothreonine. The 285-residue stretch at 24–308 (YQNLSPVGSG…AAQALAHAYF (285 aa)) folds into the Protein kinase domain. ATP-binding positions include 30–38 (VGSGAYGSV) and lysine 53. Lysine 53 is modified (N6-acetyllysine). Aspartate 150 acts as the Proton acceptor in catalysis. N6-acetyllysine is present on lysine 152. Threonine 180 carries the post-translational modification Phosphothreonine. Positions 180-182 (TGY) match the TXY motif. Tyrosine 182 is subject to Phosphotyrosine. Position 323 is a phosphotyrosine; by ZAP70 (tyrosine 323).

This sequence belongs to the protein kinase superfamily. CMGC Ser/Thr protein kinase family. MAP kinase subfamily. As to quaternary structure, component of a signaling complex containing at least AKAP13, PKN1, MAPK14, ZAK and MAP2K3. Within this complex, AKAP13 interacts directly with PKN1, which in turn recruits MAPK14, MAP2K3 and ZAK. Binds to a kinase interaction motif within the protein tyrosine phosphatase, PTPRR. This interaction retains MAPK14 in the cytoplasm and prevents nuclear accumulation. Interacts with SPAG9 and GADD45A. Interacts with CDC25B, CDC25C, DUSP1, DUSP10, DUSP16, NP60, SUPT20H and TAB1. Interacts with casein kinase II subunits CSNK2A1 and CSNK2B. Interacts with PPM1D. Interacts with CDK5RAP3; recruits PPM1D to MAPK14 and may regulate its dephosphorylation. Interacts with DUSP2; this interaction does not lead to catalytic activation of DUSP2 and dephosphrylation of MAPK14. It depends on Mg(2+) as a cofactor. In terms of processing, dually phosphorylated on Thr-180 and Tyr-182 by the MAP2Ks MAP2K3/MKK3, MAP2K4/MKK4 and MAP2K6/MKK6 in response to inflammatory cytokines, environmental stress or growth factors, which activates the enzyme. Dual phosphorylation can also be mediated by TAB1-mediated autophosphorylation. TCR engagement in T-cells also leads to Tyr-323 phosphorylation by ZAP70. Dephosphorylated and inactivated by DUPS1, DUSP10 and DUSP16. PPM1D also mediates dephosphorylation and inactivation of MAPK14. Acetylated at Lys-53 and Lys-152 by KAT2B and EP300. Acetylation at Lys-53 increases the affinity for ATP and enhances kinase activity. Lys-53 and Lys-152 are deacetylated by HDAC3. Post-translationally, ubiquitinated. Ubiquitination leads to degradation by the proteasome pathway.

The protein resides in the cytoplasm. It is found in the nucleus. It carries out the reaction L-seryl-[protein] + ATP = O-phospho-L-seryl-[protein] + ADP + H(+). It catalyses the reaction L-threonyl-[protein] + ATP = O-phospho-L-threonyl-[protein] + ADP + H(+). Its activity is regulated as follows. Activated by cell stresses such as DNA damage, heat shock, osmotic shock, anisomycin and sodium arsenite, as well as pro-inflammatory stimuli such as bacterial lipopolysaccharide (LPS) and interleukin-1. Activation occurs through dual phosphorylation of Thr-180 and Tyr-182 by either of two dual specificity kinases, MAP2K3/MKK3 or MAP2K6/MKK6, and potentially also MAP2K4/MKK4, as well as by TAB1-mediated autophosphorylation. MAPK14 phosphorylated on both Thr-180 and Tyr-182 is 10-20-fold more active than MAPK14 phosphorylated only on Thr-180, whereas MAPK14 phosphorylated on Tyr-182 alone is inactive. whereas Thr-180 is necessary for catalysis, Tyr-182 may be required for auto-activation and substrate recognition. Phosphorylated at Tyr-323 by ZAP70 in an alternative activation pathway in response to TCR signaling in T-cells. This alternative pathway is inhibited by GADD45A. Inhibited by dual specificity phosphatases, such as DUSP1, DUSP10, and DUSP16. Specifically inhibited by the binding of pyridinyl-imidazole compounds, which are cytokine-suppressive anti-inflammatory drugs (CSAID). SB203580 is an inhibitor of MAPK14. Its function is as follows. Serine/threonine kinase which acts as an essential component of the MAP kinase signal transduction pathway. MAPK14 is one of the four p38 MAPKs which play an important role in the cascades of cellular responses evoked by extracellular stimuli such as pro-inflammatory cytokines or physical stress leading to direct activation of transcription factors. Accordingly, p38 MAPKs phosphorylate a broad range of proteins and it has been estimated that they may have approximately 200 to 300 substrates each. Some of the targets are downstream kinases which are activated through phosphorylation and further phosphorylate additional targets. RPS6KA5/MSK1 and RPS6KA4/MSK2 can directly phosphorylate and activate transcription factors such as CREB1, ATF1, the NF-kappa-B isoform RELA/NFKB3, STAT1 and STAT3, but can also phosphorylate histone H3 and the nucleosomal protein HMGN1. RPS6KA5/MSK1 and RPS6KA4/MSK2 play important roles in the rapid induction of immediate-early genes in response to stress or mitogenic stimuli, either by inducing chromatin remodeling or by recruiting the transcription machinery. On the other hand, two other kinase targets, MAPKAPK2/MK2 and MAPKAPK3/MK3, participate in the control of gene expression mostly at the post-transcriptional level, by phosphorylating ZFP36 (tristetraprolin) and ELAVL1, and by regulating EEF2K, which is important for the elongation of mRNA during translation. MKNK1/MNK1 and MKNK2/MNK2, two other kinases activated by p38 MAPKs, regulate protein synthesis by phosphorylating the initiation factor EIF4E2. MAPK14 also interacts with casein kinase II, leading to its activation through autophosphorylation and further phosphorylation of TP53/p53. In the cytoplasm, the p38 MAPK pathway is an important regulator of protein turnover. For example, CFLAR is an inhibitor of TNF-induced apoptosis whose proteasome-mediated degradation is regulated by p38 MAPK phosphorylation. In a similar way, MAPK14 phosphorylates the ubiquitin ligase SIAH2, regulating its activity towards EGLN3. MAPK14 may also inhibit the lysosomal degradation pathway of autophagy by interfering with the intracellular trafficking of the transmembrane protein ATG9. Another function of MAPK14 is to regulate the endocytosis of membrane receptors by different mechanisms that impinge on the small GTPase RAB5A. In addition, clathrin-mediated EGFR internalization induced by inflammatory cytokines and UV irradiation depends on MAPK14-mediated phosphorylation of EGFR itself as well as of RAB5A effectors. Ectodomain shedding of transmembrane proteins is regulated by p38 MAPKs as well. In response to inflammatory stimuli, p38 MAPKs phosphorylate the membrane-associated metalloprotease ADAM17. Such phosphorylation is required for ADAM17-mediated ectodomain shedding of TGF-alpha family ligands, which results in the activation of EGFR signaling and cell proliferation. Another p38 MAPK substrate is FGFR1. FGFR1 can be translocated from the extracellular space into the cytosol and nucleus of target cells, and regulates processes such as rRNA synthesis and cell growth. FGFR1 translocation requires p38 MAPK activation. In the nucleus, many transcription factors are phosphorylated and activated by p38 MAPKs in response to different stimuli. Classical examples include ATF1, ATF2, ATF6, ELK1, PTPRH, DDIT3, TP53/p53 and MEF2C and MEF2A. The p38 MAPKs are emerging as important modulators of gene expression by regulating chromatin modifiers and remodelers. The promoters of several genes involved in the inflammatory response, such as IL6, IL8 and IL12B, display a p38 MAPK-dependent enrichment of histone H3 phosphorylation on 'Ser-10' (H3S10ph) in LPS-stimulated myeloid cells. This phosphorylation enhances the accessibility of the cryptic NF-kappa-B-binding sites marking promoters for increased NF-kappa-B recruitment. Phosphorylates CDC25B and CDC25C which is required for binding to 14-3-3 proteins and leads to initiation of a G2 delay after ultraviolet radiation. Phosphorylates TIAR following DNA damage, releasing TIAR from GADD45A mRNA and preventing mRNA degradation. The p38 MAPKs may also have kinase-independent roles, which are thought to be due to the binding to targets in the absence of phosphorylation. Protein O-Glc-N-acylation catalyzed by the OGT is regulated by MAPK14, and, although OGT does not seem to be phosphorylated by MAPK14, their interaction increases upon MAPK14 activation induced by glucose deprivation. This interaction may regulate OGT activity by recruiting it to specific targets such as neurofilament H, stimulating its O-Glc-N-acylation. Required in mid-fetal development for the growth of embryo-derived blood vessels in the labyrinth layer of the placenta. Also plays an essential role in developmental and stress-induced erythropoiesis, through regulation of EPO gene expression. Phosphorylates S100A9 at 'Thr-113'. In Rattus norvegicus (Rat), this protein is Mitogen-activated protein kinase 14.